A 630-amino-acid polypeptide reads, in one-letter code: 1-deoxy-D-xylulose-5-phosphate synthase (630 aa).

Residues histidine 72 and 113 to 115 (GHS) contribute to the thiamine diphosphate site. Aspartate 144 is a binding site for Mg(2+). Residues 145–146 (GA), asparagine 173, tyrosine 284, and glutamate 367 contribute to the thiamine diphosphate site. Asparagine 173 is a Mg(2+) binding site.

It belongs to the transketolase family. DXPS subfamily. In terms of assembly, homodimer. The cofactor is Mg(2+). Thiamine diphosphate is required as a cofactor.

It catalyses the reaction D-glyceraldehyde 3-phosphate + pyruvate + H(+) = 1-deoxy-D-xylulose 5-phosphate + CO2. The protein operates within metabolic intermediate biosynthesis; 1-deoxy-D-xylulose 5-phosphate biosynthesis; 1-deoxy-D-xylulose 5-phosphate from D-glyceraldehyde 3-phosphate and pyruvate: step 1/1. Catalyzes the acyloin condensation reaction between C atoms 2 and 3 of pyruvate and glyceraldehyde 3-phosphate to yield 1-deoxy-D-xylulose-5-phosphate (DXP). The polypeptide is 1-deoxy-D-xylulose-5-phosphate synthase (Bacillus cereus (strain G9842)).